We begin with the raw amino-acid sequence, 137 residues long: Small ribosomal subunit protein uS12 (137 aa).

The interval methionine 1–lysine 57 is disordered. Aspartate 102 is subject to 3-methylthioaspartic acid.

This sequence belongs to the universal ribosomal protein uS12 family. In terms of assembly, part of the 30S ribosomal subunit. Contacts proteins S8 and S17. May interact with IF1 in the 30S initiation complex.

With S4 and S5 plays an important role in translational accuracy. Its function is as follows. Interacts with and stabilizes bases of the 16S rRNA that are involved in tRNA selection in the A site and with the mRNA backbone. Located at the interface of the 30S and 50S subunits, it traverses the body of the 30S subunit contacting proteins on the other side and probably holding the rRNA structure together. The combined cluster of proteins S8, S12 and S17 appears to hold together the shoulder and platform of the 30S subunit. The sequence is that of Small ribosomal subunit protein uS12 from Streptococcus pneumoniae (strain Hungary19A-6).